The primary structure comprises 735 residues: MTSWADIQKLASDLQRVQLSQSSKKLSEVNCIEVLQKLIASHRIDVVYTRDGHSYVTKNHLETEIKNECIAAGGRASLTDIAVALNIDFDHIEKTSRLIVSTDDEFTISNAEIFATEYVHRLRNELRTLLDEQGNQTTAALCKHWNLSSELLQSLLIEKLGSSDFQGVVDGDTIYTSSFLNARQLVLRAILIALTKITPISTIQKRVGLTPKRFWIAFENLQSLGEIPGTLIGSRTSPSCSYRPMMYDHLVKSCVLNQYRQNEFLEISTLKTLGVDAKPALEEVLGSSEFKKLVSMRSMFMTKELMDQCINAVQEDLQKSGISDVHLALQSLNLPLDTADEDEIGSKVANVEKDSHFAEGFVFKGAVLTEALRSIDKLLDVRAHEEVDRLEAEKKKQGGAKAAVKVQEETDDWGDGKKGGKGGKKNAKSVKGGSKSSAPSTSSNLSANISINSEELEIWLRESQSVPEEILSVIVEKLNQETTTLLRKKVQDIQAHQLVASVANSKKSLSAIGDKCRQLYDSFNTFETATSTFADPLGSDLRQYLLKTVGNEIALALLSYVMGVDNAHQLKEKQREETIENLPEMLRDPIRSVFASLKSTDDDALDKFHDAVYNCSAPSATSLALKKVDKKGRAEVGAKITAELHEQLCSQTEPATTLLLSVLYILAKAGRPTTASGKFVSQLVAQIKDLCPENVFDLLQACQKGVVTCIKNKGDEVAKEMLVNDISSLKQSIMP.

Residues 389-445 (RLEAEKKKQGGAKAAVKVQEETDDWGDGKKGGKGGKKNAKSVKGGSKSSAPSTSSNL) are disordered. The segment covering 419–428 (GGKGGKKNAK) has biased composition (basic residues). A compositionally biased stretch (low complexity) spans 429–445 (SVKGGSKSSAPSTSSNL).

This sequence belongs to the UFL1 family.

Its function is as follows. E3 UFM1-protein ligase that mediates ufmylation of target proteins. The chain is E3 UFM1-protein ligase 1 homolog (ufl-1) from Caenorhabditis elegans.